Consider the following 855-residue polypeptide: DNA mismatch repair protein MutS (855 aa).

613-620 (GPNMGGKS) provides a ligand contact to ATP. The disordered stretch occupies residues 796–816 (TTSLPHEMPSQQSGKPASPMQ).

This sequence belongs to the DNA mismatch repair MutS family.

This protein is involved in the repair of mismatches in DNA. It is possible that it carries out the mismatch recognition step. This protein has a weak ATPase activity. This chain is DNA mismatch repair protein MutS, found in Pseudomonas aeruginosa (strain LESB58).